A 264-amino-acid chain; its full sequence is Small ribosomal subunit protein uS2 (264 aa).

Acidic residues predominate over residues 243–253 (IEAAEDGEEVD). Positions 243 to 264 (IEAAEDGEEVDNAQLTSSQGRS) are disordered. A compositionally biased stretch (polar residues) spans 255-264 (AQLTSSQGRS).

This sequence belongs to the universal ribosomal protein uS2 family.

The sequence is that of Small ribosomal subunit protein uS2 from Deinococcus geothermalis (strain DSM 11300 / CIP 105573 / AG-3a).